The chain runs to 121 residues: Large ribosomal subunit protein bL12 (121 aa).

It belongs to the bacterial ribosomal protein bL12 family. In terms of assembly, homodimer. Part of the ribosomal stalk of the 50S ribosomal subunit. Forms a multimeric L10(L12)X complex, where L10 forms an elongated spine to which 2 to 4 L12 dimers bind in a sequential fashion. Binds GTP-bound translation factors.

Its function is as follows. Forms part of the ribosomal stalk which helps the ribosome interact with GTP-bound translation factors. Is thus essential for accurate translation. This is Large ribosomal subunit protein bL12 from Pediococcus pentosaceus (strain ATCC 25745 / CCUG 21536 / LMG 10740 / 183-1w).